The primary structure comprises 1026 residues: MLGTRVTRAVYTRAPLKLQLRALGLHRRYVHNGSKNDEGSSTSTTTNKEENDKKLPDVYPQMLALPISRRPLFPGFYKAVVISEPRVMKAITDMVERQQPYIGAFMLKDSNNDTDIIHDISEVHELGVLAQVTSAFPSKDEKTGKETMTALLYPHKRIKIDQLIPPKDVKIEDIVVEKVVDNEVASEETKDEETVDKTESATDKVSEEITEEIAKAPSTEVTEDPDNYENPTDFLKDYNVTLVNVSNLEDEPFDIKSPIINALTSEILKVFKEISQLNSMFREQIATFSASIQSATTNIFEEPAKLADFAAAVSAGEEEELQEVLESLNIEQRLEKSLLVLKKELMNAELQNKISKDVETKIQKRQKEYYLMEQLKGIKRELGIDDGRDKLVDTYKKRVEKLNLPENVQKTFDEEITKLATLETSMSEFGVIRNYLDWLTSLPWGINSKEQYSIPRARKILDEDHYGMKDVKDRILEFIAVGKLLGKVDGKIICFVGPPGVGKTSIGKSISRALNRQFFRFSVGGMTDVAEIKGHRRTYIGALPGRIIQALKKCQTQNPLILIDEIDKIGHGGIHGDPSAALLEVLDPEQNNSFLDNYLDIPIDLSKVLFVCTANSLDTIPRPLLDRMEVIELTGYVAEDKIKIAEQYLVPSAKKTAGLQNATVSMDEEAINALMKYYCRESGVRNLKKHIEKIYRKAALEVVKKMSIEDTEPLVSTSEEPQLSQTNQNISSSSAEDSTTDLEDSVNPDTAKEASKPNNSQEGASVEETKKAVKTEEEEDTSMIVPEDIKVEITPEDLKKYVGPPIYTTDRLYETTPPGVIMGLAWTNMGGCSLYVESVLEQPLHNCKHANLERTGQLGDVMKESSRLAYSFSKMYLSKKFPENRFFEKAAIHLHCPEGATPKDGPSAGVTMATSFLSLALNKPVDPTVAMTGELTLTGKVLRIGGLREKVVAAKRSGAKTVIFPKDNLNDWEELPENVKEGMEPLAADWYDDIYKRLFSGVKKSEGNNVWKSEFELIDKKKKEND.

The N-terminal 29 residues, 1–29, are a transit peptide targeting the mitochondrion; it reads MLGTRVTRAVYTRAPLKLQLRALGLHRRY. Disordered stretches follow at residues 29–55 and 185–206; these read YVHNGSKNDEGSSTSTTTNKEENDKKL and ASEETKDEETVDKTESATDKVS. In terms of domain architecture, Lon N-terminal spans 62-345; it reads MLALPISRRP…KSLLVLKKEL (284 aa). Over residues 185–194 the composition is skewed to acidic residues; that stretch reads ASEETKDEET. Residues 195-206 are compositionally biased toward basic and acidic residues; it reads VDKTESATDKVS. 497–504 contributes to the ATP binding site; that stretch reads GPPGVGKT. Residues 711–785 form a disordered region; sequence TEPLVSTSEE…EEEEDTSMIV (75 aa). Residues 714-737 show a composition bias toward polar residues; sequence LVSTSEEPQLSQTNQNISSSSAED. In terms of domain architecture, Lon proteolytic spans 815–1001; it reads TTPPGVIMGL…DDIYKRLFSG (187 aa). Residues Ser-907 and Lys-950 contribute to the active site.

Belongs to the peptidase S16 family. As to quaternary structure, homohexamer or homoheptamer. Organized in a ring with a central cavity.

Its subcellular location is the mitochondrion matrix. The enzyme catalyses Hydrolysis of proteins in presence of ATP.. In terms of biological role, ATP-dependent serine protease that mediates the selective degradation of misfolded, unassembled or oxidatively damaged polypeptides as well as certain short-lived regulatory proteins in the mitochondrial matrix. May also have a chaperone function in the assembly of inner membrane protein complexes. Participates in the regulation of mitochondrial gene expression and in the maintenance of the integrity of the mitochondrial genome. Binds to mitochondrial DNA in a site-specific manner. This chain is Lon protease homolog, mitochondrial, found in Candida glabrata (strain ATCC 2001 / BCRC 20586 / JCM 3761 / NBRC 0622 / NRRL Y-65 / CBS 138) (Yeast).